We begin with the raw amino-acid sequence, 328 residues long: Mitochondrial GTPase 1 (328 aa).

A CP-type G domain is found at 23–211; the sequence is NKTLKRLKNL…MLDTPGIMTP (189 aa). GTP contacts are provided by residues 70–73, 155–160, and glycine 207; these read NKCD and NTGKSS.

The protein belongs to the TRAFAC class YlqF/YawG GTPase family. MTG1 subfamily.

The protein localises to the mitochondrion inner membrane. In terms of biological role, mitochondrial GTPase involved in assembly of the large ribosomal subunit. Plays a role in expression of the mitochondrial translational machinery. This chain is Mitochondrial GTPase 1 (mtg1), found in Schizosaccharomyces pombe (strain 972 / ATCC 24843) (Fission yeast).